The primary structure comprises 655 residues: Chaperone protein dnaK1 (655 aa).

Residue T197 is modified to Phosphothreonine; by autocatalysis.

It belongs to the heat shock protein 70 family.

Functionally, acts as a chaperone. This Synechococcus elongatus (strain ATCC 33912 / PCC 7942 / FACHB-805) (Anacystis nidulans R2) protein is Chaperone protein dnaK1 (dnaK1).